The following is a 51-amino-acid chain: Large ribosomal subunit protein eL39 (51 aa).

It belongs to the eukaryotic ribosomal protein eL39 family.

The polypeptide is Large ribosomal subunit protein eL39 (Hyperthermus butylicus (strain DSM 5456 / JCM 9403 / PLM1-5)).